A 306-amino-acid chain; its full sequence is Non-specific ribonucleoside hydrolase RihC (306 aa).

His235 is an active-site residue.

Belongs to the IUNH family. RihC subfamily.

Its function is as follows. Hydrolyzes both purine and pyrimidine ribonucleosides with a broad-substrate specificity. The chain is Non-specific ribonucleoside hydrolase RihC from Salmonella dublin (strain CT_02021853).